The sequence spans 413 residues: Peptide chain release factor 1, mitochondrial (413 aa).

N5-methylglutamine is present on Q287. Residues 335-363 (RLEKEEKERKARKSQVSSTNRSDKIRTYN) are disordered.

Belongs to the prokaryotic/mitochondrial release factor family. Post-translationally, methylation of glutamine in the GGQ triplet is conserved from bacteria to mammals. N5-methylated on Gln-287 by MTQ1.

It is found in the mitochondrion. Functionally, mitochondrial peptide chain release factor that directs the termination of translation in response to the peptide chain termination codons UAA and UAG. The polypeptide is Peptide chain release factor 1, mitochondrial (MRF1) (Saccharomyces cerevisiae (strain ATCC 204508 / S288c) (Baker's yeast)).